The sequence spans 340 residues: Glyceraldehyde-3-phosphate dehydrogenase, cytosolic (340 aa).

Residues 16–17 (RI), D38, and R85 each bind NAD(+). D-glyceraldehyde 3-phosphate contacts are provided by residues 156–158 (SCT), T187, 216–217 (TG), and R239. C157 serves as the catalytic Nucleophile. N321 contacts NAD(+).

This sequence belongs to the glyceraldehyde-3-phosphate dehydrogenase family. In terms of assembly, homotetramer.

It localises to the cytoplasm. It carries out the reaction D-glyceraldehyde 3-phosphate + phosphate + NAD(+) = (2R)-3-phospho-glyceroyl phosphate + NADH + H(+). It participates in carbohydrate degradation; glycolysis; pyruvate from D-glyceraldehyde 3-phosphate: step 1/5. Key enzyme in glycolysis that catalyzes the first step of the pathway by converting D-glyceraldehyde 3-phosphate (G3P) into 3-phospho-D-glyceroyl phosphate. Essential for the maintenance of cellular ATP levels and carbohydrate metabolism. The chain is Glyceraldehyde-3-phosphate dehydrogenase, cytosolic (GAPC) from Pinus sylvestris (Scotch pine).